We begin with the raw amino-acid sequence, 43 residues long: Mu-conotoxin-like CalTx 12.2.1E (43 aa).

Residue Arg1 is a propeptide. Disulfide bonds link Cys4-Cys16, Cys11-Cys24, Cys18-Cys29, and Cys23-Cys35. Trp31 is modified (6'-bromotryptophan). 4-hydroxyproline is present on Pro36. Position 40 is a 6'-bromotryptophan (Trp40).

Expressed by the venom duct.

It is found in the secreted. Its function is as follows. Mu-conotoxins block voltage-gated sodium channels. This toxin reversibly blocks voltage-gated sodium channel in cephalopods, with no alteration in the voltage dependence of sodium conductance or on the kinetics of inactivation. The sequence is that of Mu-conotoxin-like CalTx 12.2.1E from Californiconus californicus (California cone).